The chain runs to 472 residues: Protein hedgehog (472 aa).

The N-palmitoyl cysteine moiety is linked to residue Cys84. The Ca(2+) site is built by Glu149, Asp154, Glu185, Asp188, and Asp190. Residue Gly256 is the site of Cholesterol glycine ester attachment.

This sequence belongs to the hedgehog family. Interacts with shf. The C-terminal part of the hedgehog protein precursor displays an autoproteolysis activity that results in the cleavage of the full-length protein into two parts (N-product and C-product). In addition, the C-terminal part displays a cholesterol transferase activity that results by the covalent attachment of a cholesterol moiety to the C-terminal of the newly generated N-product. The N-product is the active species in both local and long-range signaling, whereas the C-product has no signaling activity. In terms of processing, cholesterylation is required for N-product targeting to lipid rafts and multimerization. Post-translationally, N-palmitoylation by Rasp of the hedgehog N-product, within the secretory pathway, is required for the embryonic and larval patterning activities of the hedgehog signal.

The protein localises to the nucleus. Its subcellular location is the cytoplasm. The protein resides in the cell membrane. The catalysed reaction is glycyl-L-cysteinyl-[protein] + cholesterol + H(+) = [protein]-C-terminal glycyl cholesterol ester + N-terminal L-cysteinyl-[protein]. Functionally, the C-terminal part of the hedgehog protein precursor displays an autoproteolysis activity that results in the cleavage of the full-length protein into two parts (N-product and C-product). In addition, the C-terminal part displays a cholesterol transferase activity that results by the covalent attachment of a cholesterol moiety to the C-terminal of the newly generated N-product. Once cleaved, the C-product has no signaling activity and diffuses from the cell. Its function is as follows. The dually lipidated hedgehog protein N-product is a morphogen which is essential for a variety of patterning events during development. Establishes the anterior-posterior axis of the embryonic segments and patterns the larval imaginal disks. Binds to the patched (ptc) receptor, which functions in association with smoothened (smo), to activate the transcription of target genes wingless (wg), decapentaplegic (dpp) and ptc. In the absence of hh, ptc represses the constitutive signaling activity of smo through fused (fu). Essential component of a signaling pathway which regulates the Duox-dependent gut immune response to bacterial uracil; required to activate Cad99C-dependent endosome formation, norpA-dependent Ca2+ mobilization and p38 MAPK, which are essential steps in the Duox-dependent production of reactive oxygen species (ROS) in response to intestinal bacterial infection. During photoreceptor differentiation, it up-regulates transcription of Ubr3, which in turn promotes the hh-signaling pathway by mediating the ubiquitination and degradation of cos. This Drosophila ananassae (Fruit fly) protein is Protein hedgehog.